Consider the following 559-residue polypeptide: Terpene synthase 1 (559 aa).

Mg(2+) is bound by residues D312, D316, D456, and E464. A DDXXD motif motif is present at residues 312 to 316 (DDLYD).

It belongs to the terpene synthase family. Tpsa subfamily. Mg(2+) is required as a cofactor. The cofactor is Mn(2+). Mostly expressed in stems and, to a lower extent, in leaves, roots and fruits.

The catalysed reaction is (2E,6E)-farnesyl diphosphate = (-)-(E)-beta-caryophyllene + diphosphate. It carries out the reaction (2E,6E)-farnesyl diphosphate = alpha-humulene + diphosphate. It participates in secondary metabolite biosynthesis; terpenoid biosynthesis. Its function is as follows. Sesquiterpene synthase involved in the biosynthesis of volatile compounds that contribute to the characteristic flavors of black pepper. Mediates the conversion of (2E,6E)-farnesyl diphosphate (FPP) into beta-caryophyllene and, as a minor compound, into alpha-humulene. This chain is Terpene synthase 1, found in Piper nigrum (Black pepper).